Reading from the N-terminus, the 71-residue chain is MNDKVAATLVLVVTYSIVGASLWCLTYAWHDETKLYYWCIVQLLPVMLWVWCVISWCGAQLFGYAKRGKAD.

Helical transmembrane passes span 5–25 and 35–55; these read VAAT…LWCL and LYYW…CVIS.

Interacts with GPI2, suggesting that it is a component of the GPI-GnT complex, probably composed of GPI1, GPI2, GPI3, GPI15, and ERI1.

It is found in the endoplasmic reticulum membrane. Its pathway is glycolipid biosynthesis; glycosylphosphatidylinositol-anchor biosynthesis. In terms of biological role, probable component of the GPI-GlcNAc transferase (GPI-GnT) complex in the endoplasmic reticulum, a complex that catalyzes transfer of GlcNAc from UDP-GlcNAc to an acceptor phosphatidylinositol, the first step in the production of GPI-anchors for cell surface proteins. The polypeptide is Phosphatidylinositol N-acetylglucosaminyltransferase ERI1 subunit (ERI1) (Eremothecium gossypii (strain ATCC 10895 / CBS 109.51 / FGSC 9923 / NRRL Y-1056) (Yeast)).